The primary structure comprises 213 residues: Protein RCR1 (213 aa).

The Lumenal portion of the chain corresponds to 1–39; sequence MGLISYENEAINEVKKADNHHVSKFVTSYYGPSSSSWQS. The chain crosses the membrane as a helical span at residues 40 to 62; it reads GIWILFVLFVAAVILIILFTFVA. At 63–213 the chain is on the cytoplasmic side; the sequence is NRRRRRMGRA…PERAKVNARS (151 aa). Residues 104 to 107 carry the PY motif motif; the sequence is VPEY. Positions 190–213 are disordered; it reads ERLPGGTTTQEINPPERAKVNARS. Basic and acidic residues predominate over residues 203 to 213; that stretch reads PPERAKVNARS.

In terms of assembly, interacts with PMT4 and WW domain of RSP5.

Its subcellular location is the endoplasmic reticulum membrane. Its function is as follows. Regulates chitin deposition in the cell wall. The chain is Protein RCR1 (RCR1) from Saccharomyces cerevisiae (strain ATCC 204508 / S288c) (Baker's yeast).